A 157-amino-acid chain; its full sequence is 3-dehydroquinate dehydratase (157 aa).

The active-site Proton acceptor is the tyrosine 24. Substrate-binding residues include asparagine 75, histidine 81, and aspartate 88. Histidine 101 functions as the Proton donor in the catalytic mechanism. Substrate is bound by residues 102–103 (LS) and arginine 112.

Belongs to the type-II 3-dehydroquinase family. As to quaternary structure, homododecamer.

It carries out the reaction 3-dehydroquinate = 3-dehydroshikimate + H2O. Its pathway is metabolic intermediate biosynthesis; chorismate biosynthesis; chorismate from D-erythrose 4-phosphate and phosphoenolpyruvate: step 3/7. Catalyzes a trans-dehydration via an enolate intermediate. This is 3-dehydroquinate dehydratase from Brucella canis (strain ATCC 23365 / NCTC 10854 / RM-666).